Here is an 84-residue protein sequence, read N- to C-terminus: Small ribosomal subunit protein uS17 (84 aa).

This sequence belongs to the universal ribosomal protein uS17 family. Part of the 30S ribosomal subunit.

Its function is as follows. One of the primary rRNA binding proteins, it binds specifically to the 5'-end of 16S ribosomal RNA. This Ureaplasma parvum serovar 3 (strain ATCC 27815 / 27 / NCTC 11736) protein is Small ribosomal subunit protein uS17.